We begin with the raw amino-acid sequence, 573 residues long: Transcription factor E3 (573 aa).

The residue at position 47 (serine 47) is a Phosphoserine; by MTOR. The interval 91-151 (TLSASSSAEG…SPAPASPAIS (61 aa)) is disordered. Positions 107-126 (SSSSSSRVLLRQQLMRAQAQ) are enriched in low complexity. The span at 127-136 (EQERRERREQ) shows a compositional bias: basic and acidic residues. The span at 137 to 151 (ASSFPSPAPASPAIS) shows a compositional bias: low complexity. Arginine 186 is subject to Asymmetric dimethylarginine. The tract at residues 209–248 (LASQALTPPPGGASVQPLPTPEAAHAPGPTSSAPNSPMAL) is disordered. A strong transcription activation domain region spans residues 258 to 269 (EIDDVIDEIISL). Position 319 is a phosphoserine; by MTOR (serine 319). Lysine 337 is covalently cross-linked (Glycyl lysine isopeptide (Lys-Gly) (interchain with G-Cter in SUMO2)). A bHLH domain is found at 344–397 (QKKDNHNLIERRRRFNINDRIKELGTLIPKSSDPEMRWNKGTILKASVDYIRKL). A Nuclear localization signal motif is present at residues 354–357 (RRRR). The interval 407–428 (LESRQRSLEQANRSLQLRIQEL) is leucine-zipper. A disordered region spans residues 531–573 (VGGLSGGTLSPLRAASDPLLSSVSPAVSKASSRRSSFSMEEES). A compositionally biased stretch (low complexity) spans 537-573 (GTLSPLRAASDPLLSSVSPAVSKASSRRSSFSMEEES). Phosphoserine is present on residues serine 540, serine 546, serine 552, serine 554, serine 558, and serine 566.

The protein belongs to the MiT/TFE family. Homodimer and heterodimer; with TFEB or MITF. Interacts with RRAGC/RagC GDP-bound and RRAGD/RagD GDP-bound; promoting its recruitment to lysosomal membrane in the presence of nutrients. Post-translationally, phosphorylation ar Ser-47 and Ser-319 by MTOR via non-canonical mTORC1 pathway regulates its stability and subcellular location, respectively. When nutrients are present, phosphorylation by MTOR at Ser-47 promotes ubiquitination by the SCF(BTRC) complex, followed by degradation. When nutrients are present, phosphorylation by MTOR at Ser-319 also promotes association with 14-3-3/YWHA adapters and retention in the cytosol. Phosphorylation at Ser-47 plays a more critical role than phosphorylation at Ser-319 for TFE3 inactivation. Inhibition of mTORC1, starvation and lysosomal disruption, promotes dephosphorylation and transcription factor activity. Ubiquitinated by the SCF(BTRC) and SCF(FBXW11) complexes following phosphorylation at Ser-47 by MTOR, leading to its degradation by the proteasome. In terms of processing, sumoylated; does not affect dimerization with MITF.

The protein localises to the cytoplasm. It localises to the cytosol. It is found in the nucleus. Its subcellular location is the lysosome membrane. Transcription factor that acts as a master regulator of lysosomal biogenesis and immune response. Specifically recognizes and binds E-box sequences (5'-CANNTG-3'); efficient DNA-binding requires dimerization with itself or with another MiT/TFE family member such as TFEB or MITF. Involved in the cellular response to amino acid availability by acting downstream of MTOR: in the presence of nutrients, TFE3 phosphorylation by MTOR promotes its inactivation. Upon starvation or lysosomal stress, inhibition of MTOR induces TFE3 dephosphorylation, resulting in transcription factor activity. Specifically recognizes and binds the CLEAR-box sequence (5'-GTCACGTGAC-3') present in the regulatory region of many lysosomal genes, leading to activate their expression, thereby playing a central role in expression of lysosomal genes. Maintains the pluripotent state of embryonic stem cells by promoting the expression of genes such as ESRRB; mTOR-dependent TFE3 cytosolic retention and inactivation promotes exit from pluripotency. Required to maintain the naive pluripotent state of hematopoietic stem cell; mTOR-dependent cytoplasmic retention of TFE3 promotes the exit of hematopoietic stem cell from pluripotency. TFE3 activity is also involved in the inhibition of neuronal progenitor differentiation. Acts as a positive regulator of browning of adipose tissue by promoting expression of target genes; mTOR-dependent phosphorylation promotes cytoplasmic retention of TFE3 and inhibits browning of adipose tissue. In association with TFEB, activates the expression of CD40L in T-cells, thereby playing a role in T-cell-dependent antibody responses in activated CD4(+) T-cells and thymus-dependent humoral immunity. Specifically recognizes the MUE3 box, a subset of E-boxes, present in the immunoglobulin enhancer. It also binds very well to a USF/MLTF site. May regulate lysosomal positioning in response to nutrient deprivation by promoting the expression of PIP4P1. The polypeptide is Transcription factor E3 (Bos taurus (Bovine)).